We begin with the raw amino-acid sequence, 544 residues long: Calcium-dependent protein kinase 6 (544 aa).

The interval 1–47 is disordered; it reads MGNSCRGSFKDKIYEGNHSRPEENSKSTTTTVSSVHSPTTDQDFSKQ. Residue Gly2 is the site of N-myristoyl glycine attachment. The segment covering 8–25 has biased composition (basic and acidic residues); it reads SFKDKIYEGNHSRPEENS. Residues 26–40 are compositionally biased toward low complexity; that stretch reads KSTTTTVSSVHSPTT. Residues 85–343 enclose the Protein kinase domain; sequence YTLSRKLGQG…AHEVLRHPWI (259 aa). ATP is bound by residues 91–99 and Lys114; that span reads LGQGQFGTT. The Proton acceptor role is filled by Asp209. A Phosphoserine modification is found at Ser249. The autoinhibitory domain stretch occupies residues 349 to 379; it reads APDRALDPAVLSRLKQFSAMNKLKKMALKVI. EF-hand domains follow at residues 386-421, 422-457, 458-493, and 497-527; these read EEIA…YGST, LKDT…LNKL, EREE…HGMT, and LEDI…GNAG. Asp399, Asp401, Ser403, Glu410, Asp435, Asp437, Ser439, Thr441, Glu446, Asp471, Asp473, Ser475, Tyr477, Glu482, Asp505, Asp507, Asp509, Arg511, and Glu516 together coordinate Ca(2+).

Belongs to the protein kinase superfamily. Ser/Thr protein kinase family. CDPK subfamily. As to quaternary structure, interacts with SLAC1. Interacts with FD. As to expression, expressed in both guard cells and mesophyll cells. Expressed in the shoot apical meristem.

The protein localises to the cell membrane. It localises to the nucleus. The catalysed reaction is L-seryl-[protein] + ATP = O-phospho-L-seryl-[protein] + ADP + H(+). It carries out the reaction L-threonyl-[protein] + ATP = O-phospho-L-threonyl-[protein] + ADP + H(+). Activated by calcium. Autophosphorylation may play an important role in the regulation of the kinase activity. In terms of biological role, may play a role in signal transduction pathways that involve calcium as a second messenger. Functions in abscisic acid (ABA) regulation of guard cell S-type anion- and Ca(2+)-permeable channels and stomatal closure. Phosphorylates FD. The polypeptide is Calcium-dependent protein kinase 6 (CPK6) (Arabidopsis thaliana (Mouse-ear cress)).